An 862-amino-acid chain; its full sequence is Rho guanine nucleotide exchange factor 7 (862 aa).

The region spanning 1–112 (MNSAEQTVTW…SLVTLNKVTA (112 aa)) is the Calponin-homology (CH) domain. Phosphoserine occurs at positions 132, 155, 164, 228, and 236. In terms of domain architecture, SH3 spans 163–222 (NSQLVVRAKFNFQQTNEDELSFSKGDVIHVTRVEEGGWWEGTHNGRTGWFPSNYVREIKP). Residues 250–430 (YYNVVLQNIL…KNLSAQCQEV (181 aa)) form the DH domain. Residues 452–557 (DIKTLGSVTY…WVEHLQKQTK (106 aa)) form the PH domain. The residue at position 497 (serine 497) is a Phosphoserine. 3 disordered regions span residues 559 to 591 (TSVS…ADSK), 657 to 679 (KTMK…EFAV), and 728 to 748 (DQSS…EPSD). The span at 572–585 (PSHTLPSHPLTPSS) shows a compositional bias: polar residues. Residues 657–669 (KTMKKLLPKRKPE) are compositionally biased toward basic residues. Basic and acidic residues predominate over residues 670–679 (RKPSDEEFAV). Serine 673 is subject to Phosphoserine. Low complexity predominate over residues 731-744 (SLDSLGRRSSLSRL). Serine 776 bears the Phosphoserine mark. A coiled-coil region spans residues 804-854 (KSLVDTVYALKDEVQELRQDNKKMKKSLEEEQRARKDLEKLVRKVLKNMND).

Interacts with PAK kinases through the SH3 domain. Interacts with unphosphorylated PAK1. Interacts with ITCH. Interacts with SCRIB; interaction is direct and may play a role in regulation of apoptosis. Interacts with GIT1 and TGFB1I1. Interacts with FRMPD4 (via N-terminus). Interacts with CaMK1. Interacts with BIN2. Interacts with PTK2/FAK1 and RAC1. Interacts with PARVB. Interacts with YWHAZ. Interacts (via PH domain) with NOX1 (via FAD-binding FR-type domain). In terms of processing, phosphorylated on Ser-673 by CaMK1; enhancement of GEF activity and downstream activation of RAC1. Phosphorylated by PTK2/FAK1; this promotes interaction with RAC1. As to expression, seems to be expressed in the central nervous system. Isoform B, isoform C and isoform E are expressed with highest levels in brain and testis.

The protein resides in the cell junction. It is found in the focal adhesion. It localises to the cell projection. The protein localises to the ruffle. Its subcellular location is the cytoplasm. The protein resides in the cell cortex. It is found in the lamellipodium. Its function is as follows. Acts as a RAC1 guanine nucleotide exchange factor (GEF) and can induce membrane ruffling. May function as a positive regulator of apoptosis. Functions in cell migration, attachment and cell spreading. Promotes targeting of RAC1 to focal adhesions. Downstream of NMDA receptors and CaMKK-CaMK1 signaling cascade, promotes the formation of spines and synapses in hippocampal neurons. This Mus musculus (Mouse) protein is Rho guanine nucleotide exchange factor 7 (Arhgef7).